The chain runs to 525 residues: ATP synthase subunit alpha (525 aa).

Position 171-178 (171-178 (GDRQTGKS)) interacts with ATP.

This sequence belongs to the ATPase alpha/beta chains family. In terms of assembly, F-type ATPases have 2 components, CF(1) - the catalytic core - and CF(0) - the membrane proton channel. CF(1) has five subunits: alpha(3), beta(3), gamma(1), delta(1), epsilon(1). CF(0) has three main subunits: a(1), b(2) and c(9-12). The alpha and beta chains form an alternating ring which encloses part of the gamma chain. CF(1) is attached to CF(0) by a central stalk formed by the gamma and epsilon chains, while a peripheral stalk is formed by the delta and b chains.

It is found in the cell inner membrane. It catalyses the reaction ATP + H2O + 4 H(+)(in) = ADP + phosphate + 5 H(+)(out). In terms of biological role, produces ATP from ADP in the presence of a proton gradient across the membrane. The alpha chain is a regulatory subunit. The polypeptide is ATP synthase subunit alpha (Flavobacterium johnsoniae (strain ATCC 17061 / DSM 2064 / JCM 8514 / BCRC 14874 / CCUG 350202 / NBRC 14942 / NCIMB 11054 / UW101) (Cytophaga johnsonae)).